The sequence spans 94 residues: Aspartyl/glutamyl-tRNA(Asn/Gln) amidotransferase subunit C (94 aa).

It belongs to the GatC family. In terms of assembly, heterotrimer of A, B and C subunits.

It carries out the reaction L-glutamyl-tRNA(Gln) + L-glutamine + ATP + H2O = L-glutaminyl-tRNA(Gln) + L-glutamate + ADP + phosphate + H(+). The enzyme catalyses L-aspartyl-tRNA(Asn) + L-glutamine + ATP + H2O = L-asparaginyl-tRNA(Asn) + L-glutamate + ADP + phosphate + 2 H(+). Allows the formation of correctly charged Asn-tRNA(Asn) or Gln-tRNA(Gln) through the transamidation of misacylated Asp-tRNA(Asn) or Glu-tRNA(Gln) in organisms which lack either or both of asparaginyl-tRNA or glutaminyl-tRNA synthetases. The reaction takes place in the presence of glutamine and ATP through an activated phospho-Asp-tRNA(Asn) or phospho-Glu-tRNA(Gln). The polypeptide is Aspartyl/glutamyl-tRNA(Asn/Gln) amidotransferase subunit C (Desulfatibacillum aliphaticivorans).